The primary structure comprises 203 residues: Urease accessory protein UreG (203 aa).

11–18 (GPVGSGKT) serves as a coordination point for GTP.

This sequence belongs to the SIMIBI class G3E GTPase family. UreG subfamily. Homodimer. UreD, UreF and UreG form a complex that acts as a GTP-hydrolysis-dependent molecular chaperone, activating the urease apoprotein by helping to assemble the nickel containing metallocenter of UreC. The UreE protein probably delivers the nickel.

The protein localises to the cytoplasm. Its function is as follows. Facilitates the functional incorporation of the urease nickel metallocenter. This process requires GTP hydrolysis, probably effectuated by UreG. The sequence is that of Urease accessory protein UreG from Prochlorococcus marinus (strain MIT 9215).